The following is a 274-amino-acid chain: Indole-3-glycerol phosphate synthase (274 aa).

Belongs to the TrpC family.

It carries out the reaction 1-(2-carboxyphenylamino)-1-deoxy-D-ribulose 5-phosphate + H(+) = (1S,2R)-1-C-(indol-3-yl)glycerol 3-phosphate + CO2 + H2O. It functions in the pathway amino-acid biosynthesis; L-tryptophan biosynthesis; L-tryptophan from chorismate: step 4/5. This is Indole-3-glycerol phosphate synthase from Kineococcus radiotolerans (strain ATCC BAA-149 / DSM 14245 / SRS30216).